Reading from the N-terminus, the 347-residue chain is GTPase Obg (347 aa).

The region spanning 1–159 (MQFLDQAKIY…AWVWLRLKLL (159 aa)) is the Obg domain. The interval 124 to 144 (GRGNASYKSSTNRAPRQHGPG) is disordered. In terms of domain architecture, OBG-type G spans 160-327 (ADVGLVGLPN…ILDQLITMTG (168 aa)). Residues 166-173 (GLPNAGKS), 191-195 (FTTLH), 212-215 (DIPG), 279-282 (NKID), and 308-310 (SGA) each bind GTP. Mg(2+) contacts are provided by serine 173 and threonine 193.

It belongs to the TRAFAC class OBG-HflX-like GTPase superfamily. OBG GTPase family. As to quaternary structure, monomer. The cofactor is Mg(2+).

The protein localises to the cytoplasm. Its function is as follows. An essential GTPase which binds GTP, GDP and possibly (p)ppGpp with moderate affinity, with high nucleotide exchange rates and a fairly low GTP hydrolysis rate. Plays a role in control of the cell cycle, stress response, ribosome biogenesis and in those bacteria that undergo differentiation, in morphogenesis control. This Zymomonas mobilis subsp. mobilis (strain ATCC 31821 / ZM4 / CP4) protein is GTPase Obg.